A 2552-amino-acid chain; its full sequence is Protein TIC 214 (2552 aa).

Helical transmembrane passes span 15–35, 54–74, 78–98, 119–136, 154–174, and 243–263; these read LIFGIFYGILITFSKLTSYLF, LSYGFTVGHLLGYLLIYYLPF, LSNFYLKIILALGLMLYQFFW, TLAFVYGLSYRLLNYTFF, FKILFLYTTFFVWMIGHLICI, and ILATILFIVALYLLGKSPIPF. The segment at 304–325 is disordered; sequence EEQKKDEKSADEEKKRAVEEEN. Positions 305-322 are enriched in basic and acidic residues; sequence EQKKDEKSADEEKKRAVE. 3 helical membrane-spanning segments follow: residues 362-382, 423-443, and 452-472; these read TLYTFFSDCFFESFSFYAFLF, PFLVVVKPFYLYFFNFFSVYI, and FLFNHNFVFSAIFRGFSHFFF. The interval 2045–2077 is disordered; the sequence is MKAEEQKKIDEEYEEKKEKRKKEQEEQGKAFDE. Residues 2416–2511 are a coiled coil; that stretch reads RRRRQLRIVN…IKKKLMRLRF (96 aa).

Belongs to the TIC214 family. As to quaternary structure, part of the Tic complex.

The protein localises to the plastid. It localises to the chloroplast inner membrane. Functionally, involved in protein precursor import into chloroplasts. May be part of an intermediate translocation complex acting as a protein-conducting channel at the inner envelope. The sequence is that of Protein TIC 214 from Pelargonium hortorum (Common geranium).